The primary structure comprises 47 residues: Large ribosomal subunit protein bL34 (47 aa).

It belongs to the bacterial ribosomal protein bL34 family.

In Mycolicibacterium vanbaalenii (strain DSM 7251 / JCM 13017 / BCRC 16820 / KCTC 9966 / NRRL B-24157 / PYR-1) (Mycobacterium vanbaalenii), this protein is Large ribosomal subunit protein bL34.